Reading from the N-terminus, the 159-residue chain is MQKMAMLMACLACMGLAAAFSPATLGVNKPSHRQQAPVMSQVARRELLSKVLGAAALLGAASADAKVNYDAVAYLGGAQQIDVNNANIRVYQKLPGMYPSAAGKLCTNGPYVDLKDMYAKAKLSKEEEAIVKEFDKDFLFLKPQIEYVVDNLNNGLYRR.

Belongs to the PsbU family. PSII is composed of 1 copy each of membrane proteins PsbA, PsbB, PsbC, PsbD, PsbE, PsbF, PsbH, PsbI, PsbJ, PsbK, PsbL, PsbM, PsbT, PsbX, PsbY, PsbZ, Psb30/Ycf12, at least 3 peripheral proteins of the oxygen-evolving complex and a large number of cofactors. It forms dimeric complexes. Part of the oxygen-evolving complex of photosystem II.

Its subcellular location is the plastid. It localises to the chloroplast thylakoid membrane. Functionally, one of the extrinsic, lumenal subunits of photosystem II (PSII). PSII is a light-driven water plastoquinone oxidoreductase, using light energy to abstract electrons from H(2)O, generating a proton gradient subsequently used for ATP formation. The extrinsic proteins stabilize the structure of photosystem II oxygen-evolving complex (OEC), the ion environment of oxygen evolution and protect the OEC against heat-induced inactivation. In Karenia brevis (Red tide dinoflagellate), this protein is Photosystem II extrinsic protein U, chloroplastic.